A 375-amino-acid chain; its full sequence is Terpene cyclase braA (375 aa).

Positions 116, 264, and 268 each coordinate Mg(2+). Positions 116–120 match the D(D/E)XX(D/E) motif motif; that stretch reads DDEID. An NSE motif motif is present at residues 264–272; it reads NDVLSLQKE. A WxxxxxRY motif motif is present at residues 348-355; that stretch reads WSYSCERY. (2E,6E)-farnesyl diphosphate is bound by residues arginine 354 and tyrosine 355.

This sequence belongs to the terpene synthase family. In terms of assembly, homodimer. Mg(2+) is required as a cofactor.

It catalyses the reaction (2E,6E)-farnesyl diphosphate + H2O = trichobrasilenol + diphosphate. The protein operates within secondary metabolite biosynthesis. In terms of biological role, terpene cyclase; part of the gene cluster that mediates the biosynthesis of the brasilane terpene glycosides brasilane D and E. The biosynthesis starts with the activity of the terpene cyclase braA that converts farnesyl pyrophosphate into the sesquiterpene alcohol trichobrasilenol. Subsequently, trichobrasilenol is glycosylated by the O-glycosyltransferase braB putatively using UDP-GlcNAc as sugar donor to yield brasilane A. The latter then undergoes two rounds of oxidation performed by the cytochrome P450 monooxygenase braC. In the first round braC hydroxylates C-12 forming brasilane D, which serves as substrate in the second round to establish the epoxide at the bond between C-5 and C-10 and oxidize the alcohol at C-12 to an aldehyde leading to the final product brasilane E. The chain is Terpene cyclase braA from Annulohypoxylon truncatum (Hypoxylon truncatum).